Consider the following 300-residue polypeptide: Cation-efflux pump FieF (300 aa).

Helical transmembrane passes span 12–32, 40–60, 82–102, and 114–134; these read AALA…VAWY, LAAL…LLVV, AALA…LTGF, and PGVG…LVTY. Zn(2+) contacts are provided by Asp45 and Asp49. Residues His153 and Asp157 each coordinate Zn(2+). Helical transmembrane passes span 155 to 175 and 178 to 198; these read QSDV…WYGF and ADAL…LRMG.

This sequence belongs to the cation diffusion facilitator (CDF) transporter (TC 2.A.4) family. FieF subfamily. Homodimer.

It is found in the cell inner membrane. The enzyme catalyses Zn(2+)(in) + H(+)(out) = Zn(2+)(out) + H(+)(in). It carries out the reaction Cd(2+)(in) + H(+)(out) = Cd(2+)(out) + H(+)(in). It catalyses the reaction Fe(2+)(in) + H(+)(out) = Fe(2+)(out) + H(+)(in). Its function is as follows. Divalent metal cation transporter which exports Zn(2+), Cd(2+) and possibly Fe(2+). May be involved in zinc and iron detoxification by efflux. The protein is Cation-efflux pump FieF of Serratia proteamaculans (strain 568).